A 123-amino-acid polypeptide reads, in one-letter code: Ribonuclease P protein component 2 (123 aa).

It belongs to the eukaryotic/archaeal RNase P protein component 2 family. Consists of a catalytic RNA component and at least 4 protein subunits.

It catalyses the reaction Endonucleolytic cleavage of RNA, removing 5'-extranucleotides from tRNA precursor.. Functionally, part of ribonuclease P, a protein complex that generates mature tRNA molecules by cleaving their 5'-ends. The polypeptide is Ribonuclease P protein component 2 (Aeropyrum pernix (strain ATCC 700893 / DSM 11879 / JCM 9820 / NBRC 100138 / K1)).